A 328-amino-acid chain; its full sequence is Tetraacyldisaccharide 4'-kinase (328 aa).

55 to 62 is a binding site for ATP; the sequence is TAGGNGKT.

Belongs to the LpxK family.

The enzyme catalyses a lipid A disaccharide + ATP = a lipid IVA + ADP + H(+). It participates in glycolipid biosynthesis; lipid IV(A) biosynthesis; lipid IV(A) from (3R)-3-hydroxytetradecanoyl-[acyl-carrier-protein] and UDP-N-acetyl-alpha-D-glucosamine: step 6/6. In terms of biological role, transfers the gamma-phosphate of ATP to the 4'-position of a tetraacyldisaccharide 1-phosphate intermediate (termed DS-1-P) to form tetraacyldisaccharide 1,4'-bis-phosphate (lipid IVA). This is Tetraacyldisaccharide 4'-kinase from Shigella dysenteriae serotype 1 (strain Sd197).